The primary structure comprises 141 residues: Large ribosomal subunit protein uL11 (141 aa).

This sequence belongs to the universal ribosomal protein uL11 family. In terms of assembly, part of the ribosomal stalk of the 50S ribosomal subunit. Interacts with L10 and the large rRNA to form the base of the stalk. L10 forms an elongated spine to which L12 dimers bind in a sequential fashion forming a multimeric L10(L12)X complex.

Functionally, forms part of the ribosomal stalk which helps the ribosome interact with GTP-bound translation factors. The sequence is that of Large ribosomal subunit protein uL11 from Acidianus ambivalens (Desulfurolobus ambivalens).